Here is a 318-residue protein sequence, read N- to C-terminus: MINIVVLGSMNTDLVMRTKICPSGGETIHGEPDGFSTGNGGKGANQAVAVARLSNPADTKVSMLGCVGDDAFGVEMLSGLKKDGVNVDNVKKIENKSTGVAMIIVEETGENRILLSEGANGNVDTAFVKAMEQRISTCNLLIMQLEIPLEAVEIALQIAHKHGVDVLMNPAPAIPLSHDMISYCAYLVPNEHEAAILLNQADSPATLENVDAYASKLLSFGVRKAVIITLGSQGAYYKSANGESALVSACKVKAVDTTAAGDTFIGAFSNSIAHGQPLKDSLEFAAKCSAITVQRKGAASSIPSLLEVDGSFNLKKNT.

Residues 11–13 (NTD), 41–45 (GKGAN), and Glu146 contribute to the substrate site. ATP is bound by residues Asn190 and 229–234 (TLGSQG). K(+)-binding residues include Asp256 and Thr258. Residue 261-262 (GD) participates in ATP binding. Asp262 serves as a coordination point for substrate. Asp262 acts as the Proton acceptor in catalysis. Residues Thr292, Arg295, Gly297, and Ser301 each coordinate K(+).

It belongs to the carbohydrate kinase PfkB family. Ribokinase subfamily. As to quaternary structure, homodimer. Mg(2+) is required as a cofactor.

The protein resides in the cytoplasm. Its subcellular location is the nucleus. The catalysed reaction is D-ribose + ATP = D-ribose 5-phosphate + ADP + H(+). It participates in carbohydrate metabolism; D-ribose degradation; D-ribose 5-phosphate from beta-D-ribopyranose: step 2/2. Its activity is regulated as follows. Activated by a monovalent cation that binds near, but not in, the active site. The most likely occupant of the site in vivo is potassium. Ion binding induces a conformational change that may alter substrate affinity. Its function is as follows. Catalyzes the phosphorylation of ribose at O-5 in a reaction requiring ATP and magnesium. The resulting D-ribose-5-phosphate can then be used either for sythesis of nucleotides, histidine, and tryptophan, or as a component of the pentose phosphate pathway. This chain is Ribokinase, found in Schizosaccharomyces pombe (strain 972 / ATCC 24843) (Fission yeast).